Here is a 331-residue protein sequence, read N- to C-terminus: tRNA N6-adenosine threonylcarbamoyltransferase (331 aa).

Fe cation contacts are provided by His108 and His112. Substrate contacts are provided by residues 129-133, Asp161, Glu178, and Ser258; that span reads LVSGG. Asp286 is a binding site for Fe cation.

This sequence belongs to the KAE1 / TsaD family. The cofactor is Fe(2+).

Its subcellular location is the cytoplasm. It catalyses the reaction L-threonylcarbamoyladenylate + adenosine(37) in tRNA = N(6)-L-threonylcarbamoyladenosine(37) in tRNA + AMP + H(+). Its function is as follows. Required for the formation of a threonylcarbamoyl group on adenosine at position 37 (t(6)A37) in tRNAs that read codons beginning with adenine. Is probably involved in the transfer of the threonylcarbamoyl moiety of threonylcarbamoyl-AMP (TC-AMP) to the N6 group of A37. The chain is tRNA N6-adenosine threonylcarbamoyltransferase from Caldivirga maquilingensis (strain ATCC 700844 / DSM 13496 / JCM 10307 / IC-167).